We begin with the raw amino-acid sequence, 142 residues long: MKTFTATPETVTRDWFVVDAEGKTLGRIATEIATRLRGKHKPEYTPHVDTGDYIIVINAEKVTVTGNKAAGKIYYSHSGFIGGIKQISFEKLQAHKPEMIIEKAVKGMLPKGPLGRAMFRKLKVYAGTEHNHAAQQPQVLDI.

It belongs to the universal ribosomal protein uL13 family. As to quaternary structure, part of the 50S ribosomal subunit.

In terms of biological role, this protein is one of the early assembly proteins of the 50S ribosomal subunit, although it is not seen to bind rRNA by itself. It is important during the early stages of 50S assembly. In Shewanella frigidimarina (strain NCIMB 400), this protein is Large ribosomal subunit protein uL13.